We begin with the raw amino-acid sequence, 188 residues long: Threonylcarbamoyl-AMP synthase (188 aa).

One can recognise a YrdC-like domain in the interval 3 to 188 (QLHPSDIKDI…RSGKILRNGQ (186 aa)).

This sequence belongs to the SUA5 family. TsaC subfamily.

Its subcellular location is the cytoplasm. The enzyme catalyses L-threonine + hydrogencarbonate + ATP = L-threonylcarbamoyladenylate + diphosphate + H2O. Functionally, required for the formation of a threonylcarbamoyl group on adenosine at position 37 (t(6)A37) in tRNAs that read codons beginning with adenine. Catalyzes the conversion of L-threonine, HCO(3)(-)/CO(2) and ATP to give threonylcarbamoyl-AMP (TC-AMP) as the acyladenylate intermediate, with the release of diphosphate. This Shewanella putrefaciens (strain CN-32 / ATCC BAA-453) protein is Threonylcarbamoyl-AMP synthase.